The primary structure comprises 530 residues: 6-phosphofructo-2-kinase/fructose-2,6-bisphosphatase 2 (530 aa).

A compositionally biased stretch (polar residues) spans 1-15 (MSGASSSEQNNNSYE). The tract at residues 1–21 (MSGASSSEQNNNSYETKPPNL) is disordered. An N-acetylserine modification is found at Ser-2. The segment at 2-248 (SGASSSEQNN…VYYLMNIHVQ (247 aa)) is 6-phosphofructo-2-kinase. Ser-29 carries the phosphoserine; by PKA modification. Residue 45 to 53 (GLPARGKTY) coordinates ATP. Beta-D-fructose 6-phosphate contacts are provided by Arg-78 and Arg-102. Asp-128 is an active-site residue. Residues Thr-130 and Arg-136 each coordinate beta-D-fructose 6-phosphate. Cys-158 is a catalytic residue. 167-172 (NILEVK) provides a ligand contact to ATP. The beta-D-fructose 6-phosphate site is built by Lys-172, Arg-193, and Tyr-197. The tract at residues 249–530 (PRTIYLCRHG…PPALASCPCH (282 aa)) is fructose-2,6-bisphosphatase. Arg-256 lines the beta-D-fructose 2,6-bisphosphate pocket. His-257 acts as the Tele-phosphohistidine intermediate in catalysis. Position 269 (Gly-269) interacts with beta-D-fructose 2,6-bisphosphate. The active-site Proton donor/acceptor is the Glu-326. Residues Tyr-337, Arg-351, Lys-355, Tyr-366, Gln-392, and Arg-396 each coordinate beta-D-fructose 2,6-bisphosphate. 348-351 (FALR) is a binding site for ATP. ATP contacts are provided by residues 392–396 (QAVMR) and Tyr-428. A disordered region spans residues 446–512 (RDKPTNNFPK…GPTSRRPKSH (67 aa)). Polar residues predominate over residues 450-476 (TNNFPKNQTPVRMRRNSFTPLSSSNTI). Position 466 is a phosphoserine; by AMPK and PKA (Ser-466). At Thr-468 the chain carries Phosphothreonine. Thr-475 bears the Phosphothreonine; by PKC mark. Residues Ser-483 and Ser-493 each carry the phosphoserine modification.

The protein in the C-terminal section; belongs to the phosphoglycerate mutase family. Homodimer. Forms a heterodimer with PFKFB3. In terms of processing, phosphorylation by AMPK stimulates activity.

It catalyses the reaction beta-D-fructose 2,6-bisphosphate + H2O = beta-D-fructose 6-phosphate + phosphate. It carries out the reaction beta-D-fructose 6-phosphate + ATP = beta-D-fructose 2,6-bisphosphate + ADP + H(+). Phosphorylation results in the activation of the kinase activity. In terms of biological role, synthesis and degradation of fructose 2,6-bisphosphate. This Pongo abelii (Sumatran orangutan) protein is 6-phosphofructo-2-kinase/fructose-2,6-bisphosphatase 2 (PFKFB2).